Here is a 157-residue protein sequence, read N- to C-terminus: Stalk-specific protein A (157 aa).

An N-terminal signal peptide occupies residues 1–19 (MRSILILLSLLLTIAFASA).

The protein resides in the secreted. The chain is Stalk-specific protein A (staA) from Dictyostelium discoideum (Social amoeba).